The primary structure comprises 713 residues: MMDNSTESVEDAVSLPDFDNPSFYVNRELSWMAFNQRVLEEALSRDEHPLLERIKFISIFSSNLDEFFMIRVAGLEDQYEAGVQDRSIDGMTPAEQLEKIREGVTAQFIQRDACFYGDICPELARHGIEFVDYRSFSESNKEVLQQYFRHEIFPVLTPLAFDTGHPFPFVSNLSLNLAIELEDLEHQSMKFARVKVPSILPRILRLDLIDGLDFGDDRIRLLWLDDFISHHLEQLFPLMRIVQAYPFRVIRDADIEIEEDEAGDLLETIEQGIRSRRYGKVVRLDVTPDMPESIRLLLIKHLEVSSRNVYEIPGALGLSSLMELMRIDKPELKDEPFAPSNPIEEKAGGDIFSAIRQSDHLFYHPYDSFQPVVDLINQAARDPQVLSIKQTLYRVGSNSPIVQALMHAVEEGKQVAVLVELKARFDEENNIVWARALENVGAHVVYGLVGLKTHAKLTMIVRREHDKLKRYLHLGTGNYNPATAKIYTDYSFLTANEILSEDVSELFNALTGYSRHTAYRKLIVSPLNTRKRIIAMIEREIEWHKKEGNGRIVMKMNALVDRKTIKALYLASAAGVQVDLIVRGICCLVPGIEGVSHNIRVISVIGRFLEHSRAYYFRNGGMDELFLGSADIMPRNLDHRVEVLFPVLDSELINVVKSELELILSDNVKAWQMNADGTYSKVVDQRPAVNSQSVFLQQASMKKSISKFKVNGL.

Asn-63 is an ATP binding site. Arg-394 and Arg-424 together coordinate Mg(2+). Catalysis depends on His-454, which acts as the Phosphohistidine intermediate. The ATP site is built by Tyr-487, Arg-583, and His-611.

It belongs to the polyphosphate kinase 1 (PPK1) family. Mg(2+) is required as a cofactor. An intermediate of this reaction is the autophosphorylated ppk in which a phosphate is covalently linked to a histidine residue through a N-P bond.

It carries out the reaction [phosphate](n) + ATP = [phosphate](n+1) + ADP. Functionally, catalyzes the reversible transfer of the terminal phosphate of ATP to form a long-chain polyphosphate (polyP). The polypeptide is Polyphosphate kinase (Prosthecochloris aestuarii (strain DSM 271 / SK 413)).